Reading from the N-terminus, the 336-residue chain is MSEPIEKPVEKPGVEPVSDVKDTDPAKKDQPVLVSTTKLTKTQSETLKKLIDELPQILEETGDSSYDEIYGYRINKSGLEHVHDEIRNEIVLKFLIAEEYKFEEARTRLINTFKWRKKFQPLSAAYSETFDKELDDLGVITKYDGTNENLHVVTWNLYGNLKSPKKLFQKFGQDDKAEKEGSPFLRWRIGLMERALSLIDFTDKSNSKIAQVHDYNNVSMFRMDPGMKAATKEIIKIFGDNYPELLSTKFFINVPTIMSWVFTFFRTIGLVSEDTWKKFQVLNSGNLATWFGEKNLPKAYNGSNDSTVESLFASEAKTEAPEYAKIMIHKAALDID.

The segment covering 1–30 has biased composition (basic and acidic residues); it reads MSEPIEKPVEKPGVEPVSDVKDTDPAKKDQ. Positions 1–32 are disordered; the sequence is MSEPIEKPVEKPGVEPVSDVKDTDPAKKDQPV. Residues 144–308 enclose the CRAL-TRIO domain; that stretch reads DGTNENLHVV…AYNGSNDSTV (165 aa). 5 residues coordinate heme: Tyr-158, Arg-188, His-213, Tyr-215, and Lys-249.

The protein belongs to the SFH5 family. The cofactor is heme b.

It localises to the cytoplasm. It is found in the endoplasmic reticulum membrane. Its subcellular location is the microsome membrane. It carries out the reaction a 1,2-diacyl-sn-glycero-3-phospho-(1D-myo-inositol)(in) = a 1,2-diacyl-sn-glycero-3-phospho-(1D-myo-inositol)(out). Non-classical phosphatidylinositol (PtdIns) transfer protein (PITP), which exhibits PtdIns-binding/transfer activity in the absence of detectable PtdCho-binding/transfer activity. Regulates PtdIns(4,5)P2 homeostasis at the plasma membrane. Heme-binding protein that may play a role in organic oxidant-induced stress responses. The chain is Phosphatidylinositol transfer protein SFH5 (SFH5) from Meyerozyma guilliermondii (strain ATCC 6260 / CBS 566 / DSM 6381 / JCM 1539 / NBRC 10279 / NRRL Y-324) (Yeast).